A 177-amino-acid polypeptide reads, in one-letter code: Protein-export protein SecB (177 aa).

The tract at residues Met1–Ala22 is disordered. The segment covering Gly8–Ala22 has biased composition (low complexity).

Belongs to the SecB family. In terms of assembly, homotetramer, a dimer of dimers. One homotetramer interacts with 1 SecA dimer.

It is found in the cytoplasm. One of the proteins required for the normal export of preproteins out of the cell cytoplasm. It is a molecular chaperone that binds to a subset of precursor proteins, maintaining them in a translocation-competent state. It also specifically binds to its receptor SecA. This chain is Protein-export protein SecB, found in Paracoccus denitrificans (strain Pd 1222).